The sequence spans 436 residues: Hydrogenobyrinate a,c-diamide synthase (436 aa).

The GATase cobBQ-type domain occupies 244-435 (RIAVARDDAF…MHVIDFSGEA (192 aa)). The Nucleophile role is filled by cysteine 327.

Belongs to the CobB/CbiA family. It depends on Mg(2+) as a cofactor.

It catalyses the reaction hydrogenobyrinate + 2 L-glutamine + 2 ATP + 2 H2O = hydrogenobyrinate a,c-diamide + 2 L-glutamate + 2 ADP + 2 phosphate + 2 H(+). The protein operates within cofactor biosynthesis; adenosylcobalamin biosynthesis; cob(II)yrinate a,c-diamide from precorrin-2 (aerobic route): step 9/10. Its function is as follows. Catalyzes the ATP-dependent amidation of the two carboxylate groups at positions a and c of hydrogenobyrinate, using either L-glutamine or ammonia as the nitrogen source. In Brucella suis biovar 1 (strain 1330), this protein is Hydrogenobyrinate a,c-diamide synthase.